The sequence spans 226 residues: PKHD-type hydroxylase Daci_1172 (226 aa).

Positions 78–178 (KVLPPRFNRY…RYASFFWTHS (101 aa)) constitute a Fe2OG dioxygenase domain. 3 residues coordinate Fe cation: His-96, Asp-98, and His-159. Arg-169 contacts 2-oxoglutarate.

It depends on Fe(2+) as a cofactor. L-ascorbate is required as a cofactor.

In Delftia acidovorans (strain DSM 14801 / SPH-1), this protein is PKHD-type hydroxylase Daci_1172.